Consider the following 1160-residue polypeptide: ATP-dependent helicase/deoxyribonuclease subunit B (1160 aa).

The protein belongs to the helicase family. AddB/RexB type 2 subfamily. Heterodimer of AddA and RexB. The cofactor is Mg(2+).

In terms of biological role, the heterodimer acts as both an ATP-dependent DNA helicase and an ATP-dependent, dual-direction single-stranded exonuclease. Recognizes the chi site generating a DNA molecule suitable for the initiation of homologous recombination. This subunit has 5' -&gt; 3' nuclease activity but not helicase activity. The protein is ATP-dependent helicase/deoxyribonuclease subunit B of Lactobacillus helveticus (strain DPC 4571).